The primary structure comprises 348 residues: Rhodopsin (348 aa).

Residue Met-1 is modified to N-acetylmethionine. Over 1 to 36 (MNGTEGPNFYVPFSNATGVVRSPFEYPQYYLAEPWQ) the chain is Extracellular. Residues Asn-2 and Asn-15 are each glycosylated (N-linked (GlcNAc...) asparagine). The helical transmembrane segment at 37 to 61 (FSMLAAYMFLLIVLGFPINFLTLYV) threads the bilayer. The Cytoplasmic portion of the chain corresponds to 62-73 (TVQHKKLRTPLN). Residues 74–96 (YILLNLAVADLFMVFGGFTTTLY) traverse the membrane as a helical segment. The Extracellular portion of the chain corresponds to 97-110 (TSLHGYFVFGPTGC). A disulfide bridge connects residues Cys-110 and Cys-187. A helical membrane pass occupies residues 111–133 (NAEGFFATLGGEIALWSLVVLAI). The 'Ionic lock' involved in activated form stabilization motif lies at 134–136 (ERY). Residues 134 to 152 (ERYVVVCKPMSNFRFGENH) lie on the Cytoplasmic side of the membrane. The chain crosses the membrane as a helical span at residues 153 to 173 (AIMGVAFTWVMALACAAPPLF). Residues 174–202 (GWSRYIPEGLQCSCGIDYYTLKPEVNNES) are Extracellular-facing. A Zn(2+)-binding site is contributed by Glu-201. Residues 203 to 224 (FVIYMFVVHFTIPMIVIFFCYG) form a helical membrane-spanning segment. Residues 225 to 252 (QLVFTVKEARAQQQESATTQKAEKEVTR) are Cytoplasmic-facing. The chain crosses the membrane as a helical span at residues 253-274 (MVIIMVIAFLICWVPYASVAFY). Topologically, residues 275 to 286 (IFTHQGSNFGPI) are extracellular. Residue Gln-279 coordinates Zn(2+). A helical transmembrane segment spans residues 287 to 308 (FMTIPAFFAKSASIYNPVIYIM). Lys-296 is subject to N6-(retinylidene)lysine. The Cytoplasmic segment spans residues 309–348 (MNKQFRNCMLTTICCGKNPLGDDEASATVSKTETSQVAPA). 2 S-palmitoyl cysteine lipidation sites follow: Cys-322 and Cys-323. Positions 330–348 (DDEASATVSKTETSQVAPA) are interaction with SAG. Ser-334 is subject to Phosphoserine. A Phosphothreonine modification is found at Thr-336. Position 338 is a phosphoserine (Ser-338). Phosphothreonine is present on residues Thr-340 and Thr-342. At Ser-343 the chain carries Phosphoserine.

The protein belongs to the G-protein coupled receptor 1 family. Opsin subfamily. In terms of assembly, homodimer. May form a complex composed of RHO, GRK1 and RCVRN in a Ca(2+)-dependent manner; RCVRN prevents the interaction between GRK1 and RHO. Interacts with GRK1. Interacts (phosphorylated form) with SAG. Interacts with GNAT1. Interacts with GNAT3. SAG and G-proteins compete for a common binding site. Interacts with PRCD; the interaction promotes PRCD stability. Forms a complex with ASAP1 and ARF4. Forms a complex with ASAP1, RAB11A, Rabin8/RAB3IP, ARF4 and RAB11FIP3; the complex regulates Golgi-to-cilia rhodopsin/RHO transport in photoreceptors. Post-translationally, phosphorylated on some or all of the serine and threonine residues present in the C-terminal region. In terms of processing, contains one covalently linked retinal chromophore. Upon light absorption, the covalently bound 11-cis-retinal is converted to all-trans-retinal. After hydrolysis of the Schiff base and release of the covalently bound all-trans-retinal, active rhodopsin is regenerated by binding of a fresh molecule of 11-cis-retinal.

The protein resides in the membrane. The protein localises to the cell projection. Its subcellular location is the cilium. It is found in the photoreceptor outer segment. Functionally, photoreceptor required for image-forming vision at low light intensity. Required for photoreceptor cell viability after birth. Light-induced isomerization of 11-cis to all-trans retinal triggers a conformational change that activates signaling via G-proteins. Subsequent receptor phosphorylation mediates displacement of the bound G-protein alpha subunit by the arrestin SAG and terminates signaling. This chain is Rhodopsin (RHO), found in Macaca fascicularis (Crab-eating macaque).